Consider the following 576-residue polypeptide: Proline--tRNA ligase (576 aa).

The protein belongs to the class-II aminoacyl-tRNA synthetase family. ProS type 1 subfamily. Homodimer.

The protein resides in the cytoplasm. The enzyme catalyses tRNA(Pro) + L-proline + ATP = L-prolyl-tRNA(Pro) + AMP + diphosphate. In terms of biological role, catalyzes the attachment of proline to tRNA(Pro) in a two-step reaction: proline is first activated by ATP to form Pro-AMP and then transferred to the acceptor end of tRNA(Pro). As ProRS can inadvertently accommodate and process non-cognate amino acids such as alanine and cysteine, to avoid such errors it has two additional distinct editing activities against alanine. One activity is designated as 'pretransfer' editing and involves the tRNA(Pro)-independent hydrolysis of activated Ala-AMP. The other activity is designated 'posttransfer' editing and involves deacylation of mischarged Ala-tRNA(Pro). The misacylated Cys-tRNA(Pro) is not edited by ProRS. This Leptospira interrogans serogroup Icterohaemorrhagiae serovar Lai (strain 56601) protein is Proline--tRNA ligase.